Consider the following 369-residue polypeptide: 3,7-dimethylxanthine N-methyltransferase TCS1 (369 aa).

S-adenosyl-L-homocysteine is bound at residue Tyr24. A caffeine-binding site is contributed by Thr31. The S-adenosyl-L-homocysteine site is built by Cys66, Asn71, Asp103, Leu104, Ser138, and Phe139. 3 residues coordinate caffeine: Tyr156, His159, and Trp160. Asn177 is a Mg(2+) binding site. Position 225 (Arg225) interacts with caffeine. The Mg(2+) site is built by Asp263, Phe265, and Asn266. Position 321 (Phe321) interacts with caffeine.

Belongs to the methyltransferase superfamily. Type-7 methyltransferase family. Mg(2+) is required as a cofactor. As to expression, expressed in young leaves and flowers.

The catalysed reaction is 7-methylxanthine + S-adenosyl-L-methionine = theobromine + S-adenosyl-L-homocysteine + H(+). It carries out the reaction theobromine + S-adenosyl-L-methionine = caffeine + S-adenosyl-L-homocysteine + H(+). It catalyses the reaction 1,7-dimethylxanthine + S-adenosyl-L-methionine = caffeine + S-adenosyl-L-homocysteine + H(+). Its pathway is alkaloid biosynthesis. Involved in the biosynthesis of caffeine. Catalyzes the conversion of 7-methylxanthine (7mX) to theobromine and of theobromine to caffeine. Has 3-N- and 1-N-methylation activity. The protein is 3,7-dimethylxanthine N-methyltransferase TCS1 of Camellia sinensis (Tea plant).